The chain runs to 409 residues: Accessory Sec system protein translocase subunit SecY2 (409 aa).

10 helical membrane-spanning segments follow: residues I16–G36, L61–L81, V104–H124, L132–L152, M161–F181, L190–E210, G242–L262, G286–I306, L341–A361, and T374–I394.

The protein belongs to the SecY/SEC61-alpha family. SecY2 subfamily. In terms of assembly, component of the accessory SecA2/SecY2 protein translocase complex required to export cell wall proteins. May form heterotrimers with SecE and SecG subunits.

It localises to the cell membrane. In terms of biological role, part of the accessory SecA2/SecY2 system specifically required for export of possible cell wall proteins. The central subunit of a protein translocation channel. The chain is Accessory Sec system protein translocase subunit SecY2 from Streptococcus agalactiae serotype Ia (strain ATCC 27591 / A909 / CDC SS700).